A 259-amino-acid chain; its full sequence is Proteasome subunit alpha 1 (259 aa).

Residues 231–259 (LVPAEPAAASESAPEPKPDTETKPADTQD) form a disordered region. Over residues 233-243 (PAEPAAASESA) the composition is skewed to low complexity. The span at 244-259 (PEPKPDTETKPADTQD) shows a compositional bias: basic and acidic residues.

The protein belongs to the peptidase T1A family. As to quaternary structure, the 20S proteasome core is composed of 14 alpha and 14 beta subunits that assemble into four stacked heptameric rings, resulting in a barrel-shaped structure. The two inner rings, each composed of seven catalytic beta subunits, are sandwiched by two outer rings, each composed of seven alpha subunits. All four combinations of alpha- and beta-subunits (beta2-alpha1, beta2-alpha2, beta1-alpha2 and beta1-alpha1) yield fully assembled and proteolytically active proteasomes. The catalytic chamber with the active sites is on the inside of the barrel. Has probably a gated structure, the ends of the cylinder being occluded by the N-termini of the alpha-subunits. Is likely capped by the proteasome-associated ATPase, ARC. In terms of processing, the N-terminus is blocked.

It localises to the cytoplasm. Its pathway is protein degradation; proteasomal Pup-dependent pathway. With respect to regulation, the formation of the proteasomal ATPase ARC-20S proteasome complex, likely via the docking of the C-termini of ARC into the intersubunit pockets in the alpha-rings, may trigger opening of the gate for substrate entry. Interconversion between the open-gate and close-gate conformations leads to a dynamic regulation of the 20S proteasome proteolysis activity. Functionally, component of the proteasome core, a large protease complex with broad specificity involved in protein degradation. The R.erythropolis proteasomes are able to cleave oligopeptides after Tyr, Phe and Leu, very poorly after Arg but not after Glu. Thus, displays chymotrypsin-like activity, low trypsin-like activity but no caspase-like activity. This is Proteasome subunit alpha 1 from Rhodococcus erythropolis (Arthrobacter picolinophilus).